The primary structure comprises 125 residues: MIIGVGIDIVEIERFVSWTHNVRLLRRFFHQEEIVDFFKNHMRAQFLATRFAAKEAFGKALGTGLRNMELRNIRVCQNGWGKPRLEVYGAAQAMLAATGGTHIQVSLTHEREVASAIVIIEGEPL.

Positions 8 and 55 each coordinate Mg(2+).

This sequence belongs to the P-Pant transferase superfamily. AcpS family. The cofactor is Mg(2+).

It localises to the cytoplasm. It catalyses the reaction apo-[ACP] + CoA = holo-[ACP] + adenosine 3',5'-bisphosphate + H(+). Its function is as follows. Transfers the 4'-phosphopantetheine moiety from coenzyme A to a Ser of acyl-carrier-protein. This chain is Holo-[acyl-carrier-protein] synthase, found in Treponema pallidum (strain Nichols).